We begin with the raw amino-acid sequence, 141 residues long: Nucleoside diphosphate kinase (141 aa).

ATP-binding residues include Lys-9, Phe-57, Arg-85, Thr-91, Arg-102, and Asn-112. His-115 (pros-phosphohistidine intermediate) is an active-site residue.

Belongs to the NDK family. Homotetramer. Requires Mg(2+) as cofactor.

It localises to the cytoplasm. The enzyme catalyses a 2'-deoxyribonucleoside 5'-diphosphate + ATP = a 2'-deoxyribonucleoside 5'-triphosphate + ADP. It catalyses the reaction a ribonucleoside 5'-diphosphate + ATP = a ribonucleoside 5'-triphosphate + ADP. Functionally, major role in the synthesis of nucleoside triphosphates other than ATP. The ATP gamma phosphate is transferred to the NDP beta phosphate via a ping-pong mechanism, using a phosphorylated active-site intermediate. In Prosthecochloris aestuarii (strain DSM 271 / SK 413), this protein is Nucleoside diphosphate kinase.